The chain runs to 396 residues: Vitamin K-dependent protein Z (396 aa).

In terms of domain architecture, Gla spans 1–46 (AGSYLLEELFEGHLEKECWEEICVYEEAREVFEDDETTDEFWRTYM). Residues glutamate 7, glutamate 8, glutamate 11, glutamate 15, glutamate 17, glutamate 20, glutamate 21, glutamate 26, glutamate 27, glutamate 30, glutamate 33, glutamate 36, and glutamate 40 each carry the 4-carboxyglutamate modification. The cysteines at positions 18 and 23 are disulfide-linked. EGF-like domains lie at 47–83 (GGSPCASQPCLNNGSCQDSIRGYACTCAPGYEGPNCA) and 85–126 (AESE…RSCL). Disulfide bonds link cysteine 51/cysteine 62, cysteine 56/cysteine 71, cysteine 73/cysteine 82, cysteine 89/cysteine 101, cysteine 97/cysteine 110, cysteine 112/cysteine 125, and cysteine 169/cysteine 185. Serine 53 carries an O-linked (Glc...) serine glycan. Asparagine 59 carries an N-linked (GlcNAc...) asparagine glycan. Position 64 is a (3R)-3-hydroxyaspartate (aspartate 64). One can recognise a Peptidase S1 domain in the interval 135 to 357 (TLGPECCQRP…YALWLRQVTQ (223 aa)). 2 N-linked (GlcNAc...) asparagine glycosylation sites follow: asparagine 191 and asparagine 289. Cysteine 284 and cysteine 298 are oxidised to a cystine. The disordered stretch occupies residues 356 to 396 (TQQPSRASPRGDRGQGRDGEPVPGDRGGRWAPTALPPGPLV). The span at 364 to 375 (PRGDRGQGRDGE) shows a compositional bias: basic and acidic residues. The O-linked (GalNAc...) threonine glycan is linked to threonine 388.

Belongs to the peptidase S1 family. Post-translationally, the iron and 2-oxoglutarate dependent 3-hydroxylation of aspartate and asparagine is (R) stereospecific within EGF domains. Plasma.

It is found in the secreted. Functionally, inhibits activity of the coagulation protease factor Xa in the presence of SERPINA10, calcium and phospholipids. Appears to assist hemostasis by binding thrombin and promoting its association with phospholipid vesicles. The protein is Vitamin K-dependent protein Z (PROZ) of Bos taurus (Bovine).